A 290-amino-acid polypeptide reads, in one-letter code: 4-hydroxy-tetrahydrodipicolinate synthase (290 aa).

Threonine 46 contributes to the pyruvate binding site. Tyrosine 134 functions as the Proton donor/acceptor in the catalytic mechanism. Lysine 163 (schiff-base intermediate with substrate) is an active-site residue. Valine 205 serves as a coordination point for pyruvate.

The protein belongs to the DapA family. In terms of assembly, homotetramer; dimer of dimers.

Its subcellular location is the cytoplasm. It catalyses the reaction L-aspartate 4-semialdehyde + pyruvate = (2S,4S)-4-hydroxy-2,3,4,5-tetrahydrodipicolinate + H2O + H(+). It participates in amino-acid biosynthesis; L-lysine biosynthesis via DAP pathway; (S)-tetrahydrodipicolinate from L-aspartate: step 3/4. Functionally, catalyzes the condensation of (S)-aspartate-beta-semialdehyde [(S)-ASA] and pyruvate to 4-hydroxy-tetrahydrodipicolinate (HTPA). In Bacillus subtilis (strain 168), this protein is 4-hydroxy-tetrahydrodipicolinate synthase.